A 603-amino-acid chain; its full sequence is Glutamyl-tRNA(Gln) amidotransferase subunit B, mitochondrial (603 aa).

Disordered stretches follow at residues 38–61 (RGRD…SNGA) and 72–91 (EQAR…PPEH). The span at 42–58 (WSSTSRRAIDTQTSGAS) shows a compositional bias: polar residues.

The protein belongs to the GatB/GatE family. GatB subfamily. As to quaternary structure, subunit of the heterotrimeric GatCAB amidotransferase (AdT) complex, composed of A, B and C subunits.

It localises to the mitochondrion. The catalysed reaction is L-glutamyl-tRNA(Gln) + L-glutamine + ATP + H2O = L-glutaminyl-tRNA(Gln) + L-glutamate + ADP + phosphate + H(+). Allows the formation of correctly charged Gln-tRNA(Gln) through the transamidation of misacylated Glu-tRNA(Gln) in the mitochondria. The reaction takes place in the presence of glutamine and ATP through an activated gamma-phospho-Glu-tRNA(Gln). The sequence is that of Glutamyl-tRNA(Gln) amidotransferase subunit B, mitochondrial from Paracoccidioides brasiliensis (strain Pb18).